A 153-amino-acid chain; its full sequence is Membrane-spanning 4-domains subfamily A member 13 (153 aa).

A run of 4 helical transmembrane segments spans residues 1 to 21, 36 to 56, 71 to 91, and 111 to 131; these read MTGIFCIFMWYLLLILYMGQI, GCSLWGIFFIISGISIIRATW, ILCMILAIISMILTIVELSTF, and VLLSFYPLEVSMALTYSIFGC.

This sequence belongs to the MS4A family.

It is found in the membrane. Its function is as follows. May be involved in signal transduction as a component of a multimeric receptor complex. This is Membrane-spanning 4-domains subfamily A member 13 (MS4A13) from Bos taurus (Bovine).